An 809-amino-acid chain; its full sequence is DNA replication helicase (809 aa).

Residue glycine 72–serine 79 participates in ATP binding.

Belongs to the herpesviridae helicase family. In terms of assembly, associates with the primase and the primase-associated factor to form the helicase-primase complex.

The protein localises to the host nucleus. Functionally, component of the helicase/primase complex. Unwinds the DNA at the replication forks and generates single-stranded DNA for both leading and lagging strand synthesis. The primase synthesizes short RNA primers on the lagging strand that the polymerase elongates using dNTPs. Possesses helicase-like motifs and therefore may act as the helicase subunit of the complex. In Epstein-Barr virus (strain B95-8) (HHV-4), this protein is DNA replication helicase.